The chain runs to 350 residues: 2-oxoisovalerate dehydrogenase subunit beta (350 aa).

Heterodimer of an alpha and a beta chain. Requires thiamine diphosphate as cofactor.

It carries out the reaction N(6)-[(R)-lipoyl]-L-lysyl-[protein] + 3-methyl-2-oxobutanoate + H(+) = N(6)-[(R)-S(8)-2-methylpropanoyldihydrolipoyl]-L-lysyl-[protein] + CO2. Functionally, the branched-chain alpha-keto dehydrogenase complex catalyzes the overall conversion of alpha-keto acids to acyl-CoA and CO(2). It contains multiple copies of three enzymatic components: branched-chain alpha-keto acid decarboxylase (E1), lipoamide acyltransferase (E2) and lipoamide dehydrogenase (E3). The chain is 2-oxoisovalerate dehydrogenase subunit beta (bkdA2) from Pseudomonas aeruginosa (strain ATCC 15692 / DSM 22644 / CIP 104116 / JCM 14847 / LMG 12228 / 1C / PRS 101 / PAO1).